A 126-amino-acid polypeptide reads, in one-letter code: UPF0235 protein C15orf40 homolog (126 aa).

Positions 1 to 33 (MPKKAGATSKGKNQTKEPETPPPPTGPVATDSK) are disordered. Position 89 is a phosphoserine (Ser-89).

Belongs to the UPF0235 family.

This is UPF0235 protein C15orf40 homolog from Rattus norvegicus (Rat).